The sequence spans 354 residues: UDP-N-acetylglucosamine--N-acetylmuramyl-(pentapeptide) pyrophosphoryl-undecaprenol N-acetylglucosamine transferase (354 aa).

UDP-N-acetyl-alpha-D-glucosamine is bound by residues 14 to 16 (TGG), Asn126, Arg162, Ser190, Ile243, 262 to 267 (ALTVSE), and Gln287.

Belongs to the glycosyltransferase 28 family. MurG subfamily.

Its subcellular location is the cell inner membrane. It carries out the reaction di-trans,octa-cis-undecaprenyl diphospho-N-acetyl-alpha-D-muramoyl-L-alanyl-D-glutamyl-meso-2,6-diaminopimeloyl-D-alanyl-D-alanine + UDP-N-acetyl-alpha-D-glucosamine = di-trans,octa-cis-undecaprenyl diphospho-[N-acetyl-alpha-D-glucosaminyl-(1-&gt;4)]-N-acetyl-alpha-D-muramoyl-L-alanyl-D-glutamyl-meso-2,6-diaminopimeloyl-D-alanyl-D-alanine + UDP + H(+). It functions in the pathway cell wall biogenesis; peptidoglycan biosynthesis. Cell wall formation. Catalyzes the transfer of a GlcNAc subunit on undecaprenyl-pyrophosphoryl-MurNAc-pentapeptide (lipid intermediate I) to form undecaprenyl-pyrophosphoryl-MurNAc-(pentapeptide)GlcNAc (lipid intermediate II). The chain is UDP-N-acetylglucosamine--N-acetylmuramyl-(pentapeptide) pyrophosphoryl-undecaprenol N-acetylglucosamine transferase from Photobacterium profundum (strain SS9).